A 545-amino-acid polypeptide reads, in one-letter code: Indole-3-pyruvate decarboxylase (545 aa).

Glu-48 contributes to the thiamine diphosphate binding site. Residues 382 to 460 (DCLFTAMDMI…VILFNNASWE (79 aa)) form a thiamine pyrophosphate binding region. Mg(2+) is bound by residues Asp-429 and Asn-456.

The protein belongs to the TPP enzyme family. A metal cation serves as cofactor. It depends on thiamine diphosphate as a cofactor.

It catalyses the reaction indole-3-pyruvate + H(+) = indole-3-acetaldehyde + CO2. The protein operates within plant hormone metabolism; auxin biosynthesis. The chain is Indole-3-pyruvate decarboxylase (ipdC) from Azospirillum brasilense.